Here is a 2554-residue protein sequence, read N- to C-terminus: Protein sevenless (2554 aa).

Residues 1–10 (MTMFWQQNVD) are compositionally biased toward polar residues. A disordered region spans residues 1–25 (MTMFWQQNVDHQSDEQDKQAKGAAP). The Extracellular segment spans residues 1 to 2123 (MTMFWQQNVD…AEPFVSPEKR (2123 aa)). Residues 11 to 20 (HQSDEQDKQA) show a composition bias toward basic and acidic residues. Asparagine 30 carries an N-linked (GlcNAc...) asparagine glycan. Residues 51–70 (NQQAPGTSSSSSNSQNASPS) show a composition bias toward low complexity. Residues 51–75 (NQQAPGTSSSSSNSQNASPSKIVVR) form a disordered region. Residue asparagine 129 is glycosylated (N-linked (GlcNAc...) asparagine). A disordered region spans residues 181-208 (SRPQSTMAHHPDDRDRDRDPSEEQHGVD). The span at 189 to 208 (HHPDDRDRDRDPSEEQHGVD) shows a compositional bias: basic and acidic residues. One can recognise a Fibronectin type-III 1 domain in the interval 440 to 533 (APVIEHLMGL…GFVQTHSARN (94 aa)). N-linked (GlcNAc...) asparagine glycans are attached at residues asparagine 481, asparagine 505, asparagine 617, and asparagine 647. Residues 824–924 (AGGKPHSLKA…EPLAARTWPL (101 aa)) form the Fibronectin type-III 2 domain. Asparagine 966 carries an N-linked (GlcNAc...) asparagine glycan. The LDL-receptor class B repeat unit spans residues 1010–1053 (GRVYWTDLARNCVVRMDPWSGSRELLPVFEANFLALDPRQGHLY). Fibronectin type-III domains are found at residues 1202–1290 (LPDS…TPPV) and 1294–1397 (QPRR…VAPE). Asparagine 1228, asparagine 1313, asparagine 1353, asparagine 1550, asparagine 1557, asparagine 1639, asparagine 1725, asparagine 1756, asparagine 1804, asparagine 1889, asparagine 1947, and asparagine 2073 each carry an N-linked (GlcNAc...) asparagine glycan. Fibronectin type-III domains are found at residues 1801–1901 (PPRN…SFAE), 1902–1988 (LPEL…VYET), and 1995–2117 (QPGK…AEPF). A helical membrane pass occupies residues 2124-2147 (GSLVLAIIAPAAIVSSCVLALVLV). Topologically, residues 2148–2554 (RKVQKRRLRA…LYANEGVSRL (407 aa)) are cytoplasmic. In terms of domain architecture, Protein kinase spans 2209–2485 (LKLLRFLGSG…RCYNTLHAIS (277 aa)). ATP-binding positions include 2215 to 2223 (LGSGAFGEV) and lysine 2242. Aspartate 2343 functions as the Proton acceptor in the catalytic mechanism. Tyrosine 2380 is modified (phosphotyrosine; by autocatalysis). Basic and acidic residues predominate over residues 2515 to 2527 (GQPLEEHREHNER). The disordered stretch occupies residues 2515 to 2534 (GQPLEEHREHNERPEDENLT).

This sequence belongs to the protein kinase superfamily. Tyr protein kinase family. Insulin receptor subfamily. May form a complex with drk and Sos. Binds the phosphotyrosine interaction domain (PID) of Dab.

The protein resides in the cell membrane. It carries out the reaction L-tyrosyl-[protein] + ATP = O-phospho-L-tyrosyl-[protein] + ADP + H(+). Receptor for an extracellular signal required to instruct a cell to differentiate into an R7 photoreceptor. The ligand for sev is the boss (bride of sevenless) protein on the surface of the neighboring R8 cell. The sequence is that of Protein sevenless (sev) from Drosophila melanogaster (Fruit fly).